The sequence spans 601 residues: Sulfite reductase [NADPH] flavoprotein alpha-component (601 aa).

Positions 64–202 (ITLISASQTG…AAQEWRARVV (139 aa)) constitute a Flavodoxin-like domain. Residues 70-75 (SQTGNA), 117-120 (STQG), and 153-162 (LGDTSYEFFC) each bind FMN. The region spanning 236 to 450 (EAPLSASLAV…IEHNDNFRLP (215 aa)) is the FAD-binding FR-type domain. Residues T324, A358, 388–391 (RLYS), 406–408 (TVG), Y412, and 421–424 (GGAS) contribute to the FAD site. Residues 521–522 (SR), 527–531 (KIYVQ), and D563 each bind NADP(+). Y601 is an FAD binding site.

This sequence belongs to the NADPH-dependent sulphite reductase flavoprotein subunit CysJ family. The protein in the N-terminal section; belongs to the flavodoxin family. It in the C-terminal section; belongs to the flavoprotein pyridine nucleotide cytochrome reductase family. In terms of assembly, alpha(8)-beta(8). The alpha component is a flavoprotein, the beta component is a hemoprotein. FAD serves as cofactor. The cofactor is FMN.

The catalysed reaction is hydrogen sulfide + 3 NADP(+) + 3 H2O = sulfite + 3 NADPH + 4 H(+). It functions in the pathway sulfur metabolism; hydrogen sulfide biosynthesis; hydrogen sulfide from sulfite (NADPH route): step 1/1. In terms of biological role, component of the sulfite reductase complex that catalyzes the 6-electron reduction of sulfite to sulfide. This is one of several activities required for the biosynthesis of L-cysteine from sulfate. The flavoprotein component catalyzes the electron flow from NADPH -&gt; FAD -&gt; FMN to the hemoprotein component. The chain is Sulfite reductase [NADPH] flavoprotein alpha-component from Citrobacter koseri (strain ATCC BAA-895 / CDC 4225-83 / SGSC4696).